The sequence spans 450 residues: UDP-N-acetylmuramoylalanine--D-glutamate ligase (450 aa).

119-125 (GSNGKTT) contributes to the ATP binding site.

This sequence belongs to the MurCDEF family.

It localises to the cytoplasm. It carries out the reaction UDP-N-acetyl-alpha-D-muramoyl-L-alanine + D-glutamate + ATP = UDP-N-acetyl-alpha-D-muramoyl-L-alanyl-D-glutamate + ADP + phosphate + H(+). It participates in cell wall biogenesis; peptidoglycan biosynthesis. Cell wall formation. Catalyzes the addition of glutamate to the nucleotide precursor UDP-N-acetylmuramoyl-L-alanine (UMA). This Streptococcus pneumoniae (strain ATCC BAA-255 / R6) protein is UDP-N-acetylmuramoylalanine--D-glutamate ligase.